A 278-amino-acid chain; its full sequence is Large ribosomal subunit protein uL2 (278 aa).

The segment at 214 to 278 (WLGKRPHNRG…IMRSRHQRKS (65 aa)) is disordered.

It belongs to the universal ribosomal protein uL2 family. In terms of assembly, part of the 50S ribosomal subunit. Forms a bridge to the 30S subunit in the 70S ribosome.

In terms of biological role, one of the primary rRNA binding proteins. Required for association of the 30S and 50S subunits to form the 70S ribosome, for tRNA binding and peptide bond formation. It has been suggested to have peptidyltransferase activity; this is somewhat controversial. Makes several contacts with the 16S rRNA in the 70S ribosome. The protein is Large ribosomal subunit protein uL2 of Chelativorans sp. (strain BNC1).